Reading from the N-terminus, the 473-residue chain is Photosystem II CP43 reaction center protein (473 aa).

The propeptide occupies 1 to 14 (MKTLYSLRRFYPVE). Threonine 15 carries the post-translational modification N-acetylthreonine. Position 15 is a phosphothreonine (threonine 15). Transmembrane regions (helical) follow at residues 69 to 93 (LFEV…PHLA), 134 to 155 (LLGP…KDRN), 178 to 200 (KALY…RKIT), 255 to 275 (KPFA…LSYS), and 291 to 312 (WFNN…ASQA). Position 367 (glutamate 367) interacts with [CaMn4O5] cluster. Residues 447–471 (RARAAAAGFEKGIDRDFEPVLSMTP) traverse the membrane as a helical segment.

The protein belongs to the PsbB/PsbC family. PsbC subfamily. In terms of assembly, PSII is composed of 1 copy each of membrane proteins PsbA, PsbB, PsbC, PsbD, PsbE, PsbF, PsbH, PsbI, PsbJ, PsbK, PsbL, PsbM, PsbT, PsbX, PsbY, PsbZ, Psb30/Ycf12, at least 3 peripheral proteins of the oxygen-evolving complex and a large number of cofactors. It forms dimeric complexes. The cofactor is Binds multiple chlorophylls and provides some of the ligands for the Ca-4Mn-5O cluster of the oxygen-evolving complex. It may also provide a ligand for a Cl- that is required for oxygen evolution. PSII binds additional chlorophylls, carotenoids and specific lipids..

It is found in the plastid. Its subcellular location is the chloroplast thylakoid membrane. Its function is as follows. One of the components of the core complex of photosystem II (PSII). It binds chlorophyll and helps catalyze the primary light-induced photochemical processes of PSII. PSII is a light-driven water:plastoquinone oxidoreductase, using light energy to abstract electrons from H(2)O, generating O(2) and a proton gradient subsequently used for ATP formation. This is Photosystem II CP43 reaction center protein from Morus indica (Mulberry).